A 132-amino-acid polypeptide reads, in one-letter code: Small ribosomal subunit protein uS8 (132 aa).

This sequence belongs to the universal ribosomal protein uS8 family. Part of the 30S ribosomal subunit. Contacts proteins S5 and S12.

Its function is as follows. One of the primary rRNA binding proteins, it binds directly to 16S rRNA central domain where it helps coordinate assembly of the platform of the 30S subunit. In Rickettsia felis (strain ATCC VR-1525 / URRWXCal2) (Rickettsia azadi), this protein is Small ribosomal subunit protein uS8.